Consider the following 101-residue polypeptide: Small ribosomal subunit protein uS14 (101 aa).

Residues 1 to 20 are disordered; sequence MAKISAVERNKKRERLTKRD.

The protein belongs to the universal ribosomal protein uS14 family. As to quaternary structure, part of the 30S ribosomal subunit. Contacts proteins S3 and S10.

Binds 16S rRNA, required for the assembly of 30S particles and may also be responsible for determining the conformation of the 16S rRNA at the A site. The protein is Small ribosomal subunit protein uS14 of Rhodospirillum rubrum (strain ATCC 11170 / ATH 1.1.1 / DSM 467 / LMG 4362 / NCIMB 8255 / S1).